The following is a 424-amino-acid chain: Serine hydroxymethyltransferase (424 aa).

(6S)-5,6,7,8-tetrahydrofolate is bound by residues leucine 119 and 123–125 (GHL). The residue at position 228 (lysine 228) is an N6-(pyridoxal phosphate)lysine. 353–355 (SAF) contacts (6S)-5,6,7,8-tetrahydrofolate.

The protein belongs to the SHMT family. Homodimer. Pyridoxal 5'-phosphate serves as cofactor.

The protein resides in the cytoplasm. It catalyses the reaction (6R)-5,10-methylene-5,6,7,8-tetrahydrofolate + glycine + H2O = (6S)-5,6,7,8-tetrahydrofolate + L-serine. It functions in the pathway one-carbon metabolism; tetrahydrofolate interconversion. It participates in amino-acid biosynthesis; glycine biosynthesis; glycine from L-serine: step 1/1. Catalyzes the reversible interconversion of serine and glycine with tetrahydrofolate (THF) serving as the one-carbon carrier. Also exhibits THF-independent aldolase activity toward beta-hydroxyamino acids, producing glycine and aldehydes, via a retro-aldol mechanism. The protein is Serine hydroxymethyltransferase of Natronomonas pharaonis (strain ATCC 35678 / DSM 2160 / CIP 103997 / JCM 8858 / NBRC 14720 / NCIMB 2260 / Gabara) (Halobacterium pharaonis).